The sequence spans 345 residues: MSEPDRIVSAVQRGEDIDTTMRPQSLDEFVGQKTARANLKVFIEAARSRGEALDHVLFVGPPGLGKTTLAQIMARELGVNFRSTSGPVIAKAGDLAALLTNLEERDVLFIDEIHRLNPAVEEILYPAMEDYQLDLIIGEGPAARSVKIDLAKFTLVAATTRLGLLTTPLRDRFGIPIRLEFYTVDELQAIVTRGARIMGMPLAEDGAEEIARRARGTPRIAGRLLRRVRDFAYVAGAENVTRQIADAALSRLEVDALGLDQLDRRYLHMIVENFGGGPVGIETIAAALSEPRDAIEDIIEPYLIQQGFIQRTPRGRVLAAKAWRHLGLNPPKELAQSQINLFEEE.

Residues 4–182 are large ATPase domain (RuvB-L); that stretch reads PDRIVSAVQR…FGIPIRLEFY (179 aa). Residues Arg-22, Gly-63, Lys-66, Thr-67, Thr-68, 129 to 131, Arg-172, Tyr-182, and Arg-219 each bind ATP; that span reads EDY. Thr-67 provides a ligand contact to Mg(2+). The interval 183–253 is small ATPAse domain (RuvB-S); that stretch reads TVDELQAIVT…IADAALSRLE (71 aa). Residues 256-345 form a head domain (RuvB-H) region; that stretch reads ALGLDQLDRR…QSQINLFEEE (90 aa). Arg-292, Arg-311, and Arg-316 together coordinate DNA.

It belongs to the RuvB family. Homohexamer. Forms an RuvA(8)-RuvB(12)-Holliday junction (HJ) complex. HJ DNA is sandwiched between 2 RuvA tetramers; dsDNA enters through RuvA and exits via RuvB. An RuvB hexamer assembles on each DNA strand where it exits the tetramer. Each RuvB hexamer is contacted by two RuvA subunits (via domain III) on 2 adjacent RuvB subunits; this complex drives branch migration. In the full resolvosome a probable DNA-RuvA(4)-RuvB(12)-RuvC(2) complex forms which resolves the HJ.

The protein resides in the cytoplasm. The catalysed reaction is ATP + H2O = ADP + phosphate + H(+). In terms of biological role, the RuvA-RuvB-RuvC complex processes Holliday junction (HJ) DNA during genetic recombination and DNA repair, while the RuvA-RuvB complex plays an important role in the rescue of blocked DNA replication forks via replication fork reversal (RFR). RuvA specifically binds to HJ cruciform DNA, conferring on it an open structure. The RuvB hexamer acts as an ATP-dependent pump, pulling dsDNA into and through the RuvAB complex. RuvB forms 2 homohexamers on either side of HJ DNA bound by 1 or 2 RuvA tetramers; 4 subunits per hexamer contact DNA at a time. Coordinated motions by a converter formed by DNA-disengaged RuvB subunits stimulates ATP hydrolysis and nucleotide exchange. Immobilization of the converter enables RuvB to convert the ATP-contained energy into a lever motion, pulling 2 nucleotides of DNA out of the RuvA tetramer per ATP hydrolyzed, thus driving DNA branch migration. The RuvB motors rotate together with the DNA substrate, which together with the progressing nucleotide cycle form the mechanistic basis for DNA recombination by continuous HJ branch migration. Branch migration allows RuvC to scan DNA until it finds its consensus sequence, where it cleaves and resolves cruciform DNA. This is Holliday junction branch migration complex subunit RuvB from Chelativorans sp. (strain BNC1).